An 826-amino-acid polypeptide reads, in one-letter code: Disintegrin and metalloproteinase domain-containing protein 8 (826 aa).

The signal sequence occupies residues 1–16; that stretch reads MLGLWLLSVLWTPAVA. Topologically, residues 17–658 are extracellular; it reads PGPPLPHVKQ…VSDEQAASTS (642 aa). N89 and N260 each carry an N-linked (GlcNAc...) asparagine glycan. The Peptidase M12B domain occupies 196–395; that stretch reads RYVELYVVAD…PQTGCLTNVP (200 aa). 12 disulfide bridges follow: C305–C390, C346–C374, C348–C357, C430–C452, C443–C449, C461–C481, C468–C498, C493–C503, C563–C615, C615–C625, C619–C631, and C633–C642. Residue H329 coordinates Zn(2+). Residue E330 is part of the active site. Residues H333 and H339 each coordinate Zn(2+). Positions 403–489 constitute a Disintegrin domain; sequence GPVCGNLFVE…TCPEDAFQQN (87 aa). The N-linked (GlcNAc...) asparagine glycan is linked to N431. An EGF-like domain is found at 611–643; that stretch reads RSENCSAKCNNHGVCNHKRECHCHKGWAPPNCV. N-linked (GlcNAc...) asparagine glycosylation is present at N614. A helical transmembrane segment spans residues 659–683; it reads LPVSVVVVLVILVAAMVIVAGIVIY. Residues 684–826 lie on the Cytoplasmic side of the membrane; sequence RKAPRQIQRR…VALKVPIQKR (143 aa). The segment at 701–826 is disordered; the sequence is SGLSNPLFYT…VALKVPIQKR (126 aa). Positions 733-748 are enriched in pro residues; sequence PPRPIVKPKRPPPAPP. Over residues 749–763 the composition is skewed to low complexity; sequence GAVSSSPLPVPVYAP.

In terms of assembly, interacts with FST3. Requires Zn(2+) as cofactor. Macrophages.

The protein localises to the membrane. In terms of biological role, possible involvement in extravasation of leukocytes. The protein is Disintegrin and metalloproteinase domain-containing protein 8 (Adam8) of Mus musculus (Mouse).